We begin with the raw amino-acid sequence, 212 residues long: ER lumen protein-retaining receptor 1 (212 aa).

Residues 1-4 (MNLF) are Lumenal-facing. A helical transmembrane segment spans residues 5 to 24 (RFLGDLSHLLAIILLLLKIW). Residues 25-32 (KSRSCAGI) lie on the Cytoplasmic side of the membrane. The helical transmembrane segment at 33 to 52 (SGKSQVLFAVVFTARYLDLF) threads the bilayer. The interval 47–48 (RY) is interaction with the K-D-E-L motif on target proteins. The Lumenal portion of the chain corresponds to 53–58 (TNYISL). Residues 59–79 (YNTCMKVVYIACSFTTVWMIY) form a helical membrane-spanning segment. The Cytoplasmic portion of the chain corresponds to 80–92 (SKFKATYDGNHDT). Residues 93–110 (FRVEFLVVPTAVLAFLVN) form a helical membrane-spanning segment. The Lumenal segment spans residues 111–116 (HDFTPL). Residues 117 to 135 (EILWTFSIYLESVAILPQL) form a helical membrane-spanning segment. At 136–149 (FMVSKTGEAETITS) the chain is on the cytoplasmic side. The chain crosses the membrane as a helical span at residues 150–168 (HYLFALGVYRTLYLFNWIW). The tract at residues 159-169 (RTLYLFNWIWR) is interaction with the K-D-E-L motif on target proteins. The Lumenal portion of the chain corresponds to 169 to 178 (RYHFEGFFDL). The chain crosses the membrane as a helical span at residues 179–199 (IAIVAGLVQTVLYCDFFYLYI). The Cytoplasmic segment spans residues 200–212 (TKVLKGKKLSLPA). Residues 204–207 (KGKK) form an important for recycling of cargo proteins with the sequence motif K-D-E-L from the Golgi to the endoplasmic reticulum region. S209 carries the phosphoserine; by PKA modification.

It belongs to the ERD2 family. In terms of assembly, upon ligand binding the receptor oligomerizes and interacts with components of the transport machinery such as ARFGAP1 and ARF1. Post-translationally, phosphorylation by PKA at Ser-209 is required for endoplasmic reticulum retention function.

The protein resides in the golgi apparatus membrane. It localises to the cytoplasmic vesicle. It is found in the COPI-coated vesicle membrane. The protein localises to the endoplasmic reticulum membrane. Its subcellular location is the endoplasmic reticulum-Golgi intermediate compartment membrane. Functionally, receptor for the C-terminal sequence motif K-D-E-L that is present on endoplasmic reticulum resident proteins and that mediates their recycling from the Golgi back to the endoplasmic reticulum. This is ER lumen protein-retaining receptor 1 (Kdelr1) from Rattus norvegicus (Rat).